Here is a 729-residue protein sequence, read N- to C-terminus: Cytoplasmic polyadenylation element-binding protein 4 (729 aa).

Disordered regions lie at residues 20-50 (FPVRFHPHLQPPHHHQNATPNPAAFINNNTA) and 78-133 (EKAK…KEKL). Residues 24–35 (FHPHLQPPHHHQ) show a composition bias toward basic residues. Positions 83 to 96 (QQQEQQDPLEKQQL) are enriched in low complexity. 3 positions are modified to phosphoserine: Ser97, Ser99, and Ser137. Residues 218 to 324 (FGGSFSPQIG…RDHRRGLNGG (107 aa)) form a disordered region. Residues 232 to 249 (HHPHHPHFQHHHSQHQQQ) are compositionally biased toward basic residues. Residues Ser252 and Ser255 each carry the phosphoserine modification. Over residues 285–300 (WSSYQSPSPTPSSSWS) the composition is skewed to low complexity. Positions 301 to 311 (PGGGGYGGWGA) are enriched in gly residues. A Phosphothreonine modification is found at Thr326. Phosphoserine is present on residues Ser330 and Ser332. 2 RRM domains span residues 472–563 (RKVF…PWNL) and 580–662 (KTIF…PYVL). An RNA-binding region spans residues 541 to 543 (KLY). Residues Cys667, Cys675, Cys684, Cys689, Cys694, Cys697, His702, and His710 each contribute to the Zn(2+) site.

The protein belongs to the RRM CPEB family. In terms of assembly, interacts with TOB1. In terms of tissue distribution, highly expressed in brain, including hippocampus, amygdala, granule and Purkinje cells of the cerebellum (at protein level). Expressed in spinal cord (at protein level). Expressed in kidney, lung and heart (at protein level). Expressed in liver (at protein level). Expressed in spleen and testis (at protein level). Weakly expressed in ovary and in granular cells of dentate gyrus and the pyramidal cells of CA3 and CA1 of the hippocampus.

It is found in the cytoplasm. The protein resides in the cell projection. It localises to the dendrite. Its subcellular location is the dendritic spine. The protein localises to the postsynaptic density. It is found in the axon. The protein resides in the growth cone. It localises to the endoplasmic reticulum. Its subcellular location is the perinuclear region. In terms of biological role, sequence-specific RNA-binding protein that binds to the cytoplasmic polyadenylation element (CPE), an uridine-rich sequence element (consensus sequence 5'-UUUUUAU-3') within the mRNA 3'-UTR. RNA binding results in a clear conformational change analogous to the Venus fly trap mechanism. Regulates activation of unfolded protein response (UPR) in the process of adaptation to ER stress in liver, by maintaining translation of CPE-regulated mRNAs in conditions in which global protein synthesis is inhibited. Required for cell cycle progression, specifically for cytokinesis and chromosomal segregation. Plays a role as an oncogene promoting tumor growth and progression by positively regulating translation of t-plasminogen activator/PLAT. Stimulates proliferation of melanocytes. In contrast to CPEB1 and CPEB3, does not play role in synaptic plasticity, learning and memory. The chain is Cytoplasmic polyadenylation element-binding protein 4 (Cpeb4) from Mus musculus (Mouse).